The chain runs to 391 residues: MSGPVPSRARVYTDVNTHRPREYWDYESHVVEWGNQDDYQLVRKLGRGKYSEVFEAINITNNEKVVVKILKPVKKKKIKREIKILENLRGGPNIITLADIVKDPVSRTPALVFEHVNNTDFKQLYQTLTDYDIRFYMYEILKALDYCHSMGIMHRDVKPHNVMIDHEHRKLRLIDWGLAEFYHPGQEYNVRVASRYFKGPELLVDYQMYDYSLDMWSLGCMLASMIFRKEPFFHGHDNYDQLVRIAKVLGTEDLYDYIDKYNIELDPRFNDILGRHSRKRWERFVHSENQHLVSPEALDFLDKLLRYDHQSRLTAREAMEHPYFYTVVKDQARMSSTSMAGGSTPVSSANMMSGISSVPTPSPLGPLAGSPVIAAANSLGIPVPAAAGAQQ.

The segment at Gln-36 to Leu-41 is interaction with beta subunit. One can recognise a Protein kinase domain in the interval Tyr-39–Phe-324. ATP is bound by residues Leu-45–Val-53 and Lys-68. Asp-156 serves as the catalytic Proton acceptor. Thr-344 and Thr-360 each carry phosphothreonine; by CDK1. 2 positions are modified to phosphoserine; by CDK1: Ser-362 and Ser-370.

It belongs to the protein kinase superfamily. Ser/Thr protein kinase family. CK2 subfamily. Heterotetramer composed of two catalytic subunits (alpha chain and/or alpha' chain) and two regulatory subunits (beta chains). The tetramer can exist as a combination of 2 alpha/2 beta, 2 alpha'/2 beta or 1 alpha/1 alpha'/2 beta subunits. Also part of a CK2-SPT16-SSRP1 complex composed of SSRP1, SUPT16H, CSNK2A1, CSNK2A2 and CSNK2B, which forms following UV irradiation. Interacts with RNPS1. Interacts with SNAI1. Interacts with PML. Interacts with CCAR2. Interacts with HIRIP3. Phosphorylated at Thr-344, Thr-360, Ser-362 and Ser-370 by CDK1 in prophase and metaphase and dephosphorylated during anaphase. Phosphorylation does not directly affect casein kinase 2 activity, but may contribute to its regulation by forming binding sites for interacting proteins and/or targeting it to different compartments.

The protein resides in the nucleus. It catalyses the reaction L-seryl-[protein] + ATP = O-phospho-L-seryl-[protein] + ADP + H(+). The enzyme catalyses L-threonyl-[protein] + ATP = O-phospho-L-threonyl-[protein] + ADP + H(+). Its activity is regulated as follows. Constitutively active protein kinase whose activity is not directly affected by phosphorylation. Seems to be regulated by level of expression and localization. Catalytic subunit of a constitutively active serine/threonine-protein kinase complex that phosphorylates a large number of substrates containing acidic residues C-terminal to the phosphorylated serine or threonine. Regulates numerous cellular processes, such as cell cycle progression, apoptosis and transcription, as well as viral infection. May act as a regulatory node which integrates and coordinates numerous signals leading to an appropriate cellular response. During mitosis, functions as a component of the p53/TP53-dependent spindle assembly checkpoint (SAC) that maintains cyclin-B-CDK1 activity and G2 arrest in response to spindle damage. Also required for p53/TP53-mediated apoptosis, phosphorylating 'Ser-392' of p53/TP53 following UV irradiation. Phosphorylates a number of DNA repair proteins in response to DNA damage, such as MDC1, MRE11, RAD9A, RAD51 and HTATSF1, promoting their recruitment to DNA damage sites. Can also negatively regulate apoptosis. Phosphorylates the caspases CASP9 and CASP2 and the apoptotic regulator NOL3. Phosphorylation protects CASP9 from cleavage and activation by CASP8, and inhibits the dimerization of CASP2 and activation of CASP8. Phosphorylates YY1, protecting YY1 from cleavage by CASP7 during apoptosis. Regulates transcription by direct phosphorylation of RNA polymerases I, II, III and IV. Also phosphorylates and regulates numerous transcription factors including NF-kappa-B, STAT1, CREB1, IRF1, IRF2, ATF1, ATF4, SRF, MAX, JUN, FOS, MYC and MYB. Phosphorylates Hsp90 and its co-chaperones FKBP4 and CDC37, which is essential for chaperone function. Mediates sequential phosphorylation of FNIP1, promoting its gradual interaction with Hsp90, leading to activate both kinase and non-kinase client proteins of Hsp90. Regulates Wnt signaling by phosphorylating CTNNB1 and the transcription factor LEF1. Acts as an ectokinase that phosphorylates several extracellular proteins. Phosphorylates PML at 'Ser-565' and primes it for ubiquitin-mediated degradation. Plays an important role in the circadian clock function by phosphorylating BMAL1 at 'Ser-90' which is pivotal for its interaction with CLOCK and which controls CLOCK nuclear entry. Phosphorylates FMR1, promoting FMR1-dependent formation of a membraneless compartment. May phosphorylate histone H2A on 'Ser-1'. The protein is Casein kinase II subunit alpha (Csnk2a1) of Mus musculus (Mouse).